The following is a 344-amino-acid chain: NADH-quinone oxidoreductase subunit H 2 (344 aa).

8 consecutive transmembrane segments (helical) span residues 13 to 33 (LPIL…VAWL), 82 to 102 (ILFL…WAVI), 116 to 136 (ALLY…LAGW), 161 to 181 (MGFA…GEIV), 188 to 208 (FWHW…ISGV), 240 to 260 (LFFL…ALMF), 280 to 300 (VPGI…YLWF), and 319 to 339 (VFIP…VAQL).

It belongs to the complex I subunit 1 family. In terms of assembly, NDH-1 is composed of 14 different subunits. Subunits NuoA, H, J, K, L, M, N constitute the membrane sector of the complex.

It localises to the cell inner membrane. It carries out the reaction a quinone + NADH + 5 H(+)(in) = a quinol + NAD(+) + 4 H(+)(out). In terms of biological role, NDH-1 shuttles electrons from NADH, via FMN and iron-sulfur (Fe-S) centers, to quinones in the respiratory chain. The immediate electron acceptor for the enzyme in this species is believed to be ubiquinone. Couples the redox reaction to proton translocation (for every two electrons transferred, four hydrogen ions are translocated across the cytoplasmic membrane), and thus conserves the redox energy in a proton gradient. This subunit may bind ubiquinone. The sequence is that of NADH-quinone oxidoreductase subunit H 2 from Nitrosococcus oceani (strain ATCC 19707 / BCRC 17464 / JCM 30415 / NCIMB 11848 / C-107).